Consider the following 155-residue polypeptide: MDPVCWICKDDYSIEKNYCNCKNEYKVVHDECMKKWIQYSRERSCKLCNKEYNIISVRKPFSQWVFSIKDCKKSAILYATLFLCTFIISLVLTRINITKIIDTSKNDVSFKLVTMIFYLLPFVITCISFITLIVYLYKYCKISAKNNTYDTIYEL.

Residues 1 to 55 (MDPVCWICKDDYSIEKNYCNCKNEYKVVHDECMKKWIQYSRERSCKLCNKEYNII) form an RING-CH-type zinc finger. The Cytoplasmic portion of the chain corresponds to 1-74 (MDPVCWICKD…VFSIKDCKKS (74 aa)). 8 residues coordinate Zn(2+): C5, C8, C19, C21, H29, C32, C45, and C48. A helical transmembrane segment spans residues 75 to 95 (AILYATLFLCTFIISLVLTRI). Topologically, residues 96 to 115 (NITKIIDTSKNDVSFKLVTM) are lumenal. Residues 116-136 (IFYLLPFVITCISFITLIVYL) form a helical membrane-spanning segment. Over 137 to 155 (YKYCKISAKNNTYDTIYEL) the chain is Cytoplasmic.

The protein belongs to the poxviridae LAP protein family.

Its subcellular location is the host membrane. The protein localises to the host Golgi apparatus. The protein resides in the host trans-Golgi network membrane. It is found in the host early endosome membrane. It carries out the reaction S-ubiquitinyl-[E2 ubiquitin-conjugating enzyme]-L-cysteine + [acceptor protein]-L-lysine = [E2 ubiquitin-conjugating enzyme]-L-cysteine + N(6)-ubiquitinyl-[acceptor protein]-L-lysine.. In terms of biological role, E3 ubiquitin-protein ligase which promotes ubiquitination and subsequent degradation of host MHC-I and CD4 molecules, presumably to prevent lysis of infected cells by cytotoxic T-lymphocytes and NK cell. Binds target molecules through transmembrane interaction. The result of this ubiquitination is the enhancement of the endocytosis of the target chain and the delivery to the lysosome, where it is proteolytically destroyed. The protein is E3 ubiquitin-protein ligase LAP (LAP) of Swinepox virus (strain Kasza) (SWPV).